We begin with the raw amino-acid sequence, 469 residues long: Probable Xaa-Pro aminopeptidase PEPP (469 aa).

Residues aspartate 265, aspartate 276, glutamate 399, and glutamate 439 each contribute to the Mn(2+) site.

It belongs to the peptidase M24B family. Mn(2+) serves as cofactor.

The enzyme catalyses Release of any N-terminal amino acid, including proline, that is linked to proline, even from a dipeptide or tripeptide.. Its function is as follows. Catalyzes the removal of a penultimate prolyl residue from the N-termini of peptides. The polypeptide is Probable Xaa-Pro aminopeptidase PEPP (PEPP) (Coccidioides posadasii (strain C735) (Valley fever fungus)).